Here is a 170-residue protein sequence, read N- to C-terminus: Ureidoglycolate lyase (170 aa).

This sequence belongs to the ureidoglycolate lyase family. Homodimer. Ni(2+) serves as cofactor.

The enzyme catalyses (S)-ureidoglycolate = urea + glyoxylate. Its pathway is nitrogen metabolism; (S)-allantoin degradation. In terms of biological role, catalyzes the catabolism of the allantoin degradation intermediate (S)-ureidoglycolate, generating urea and glyoxylate. Involved in the utilization of allantoin as nitrogen source. The chain is Ureidoglycolate lyase from Stutzerimonas stutzeri (strain A1501) (Pseudomonas stutzeri).